The primary structure comprises 57 residues: Large ribosomal subunit protein bL32 (57 aa).

The segment covering 1-19 has biased composition (basic residues); sequence MATPKFKKSRANTHSRRSQ. The interval 1-20 is disordered; sequence MATPKFKKSRANTHSRRSQW.

The protein belongs to the bacterial ribosomal protein bL32 family.

The protein is Large ribosomal subunit protein bL32 of Corynebacterium aurimucosum (strain ATCC 700975 / DSM 44827 / CIP 107346 / CN-1) (Corynebacterium nigricans).